A 211-amino-acid polypeptide reads, in one-letter code: FMN-dependent NADH:quinone oxidoreductase 2 (211 aa).

17–19 (SYS) is a binding site for FMN.

The protein belongs to the azoreductase type 1 family. As to quaternary structure, homodimer. FMN is required as a cofactor.

It catalyses the reaction 2 a quinone + NADH + H(+) = 2 a 1,4-benzosemiquinone + NAD(+). It carries out the reaction N,N-dimethyl-1,4-phenylenediamine + anthranilate + 2 NAD(+) = 2-(4-dimethylaminophenyl)diazenylbenzoate + 2 NADH + 2 H(+). Its activity is regulated as follows. Strongly inhibited by Pb(2+) and weakly inhibited by Cu(2+), Hg(2+) and Fe(2+). Stable in presence of Ag(+). Its function is as follows. Quinone reductase that provides resistance to thiol-specific stress caused by electrophilic quinones. Contributes to resistance to 2-methylhydroquinone (2-MHQ) and catechol. Exhibits NADH-dependent 2,6-dichloroindophenol (DCIP) oxidoreductase activity. In terms of biological role, also exhibits azoreductase activity. Catalyzes the reductive cleavage of the azo bond in aromatic azo compounds to the corresponding amines. Can reduce methyl red. In Bacillus subtilis (strain 168), this protein is FMN-dependent NADH:quinone oxidoreductase 2.